Reading from the N-terminus, the 109-residue chain is Flagellar hook-basal body complex protein FliE (109 aa).

The segment at 1–38 (MQAIHNDKSLLSPFSELNTDNRTQREESGSTFKEQKGG) is disordered. A compositionally biased stretch (basic and acidic residues) spans 22 to 38 (RTQREESGSTFKEQKGG).

The protein belongs to the FliE family.

The protein localises to the bacterial flagellum basal body. This is Flagellar hook-basal body complex protein FliE from Helicobacter acinonychis (strain Sheeba).